The chain runs to 442 residues: Cysteine proteinase 4 (442 aa).

Residues 1 to 17 (MRVLSFLCLLLVSYASA) form the signal peptide. A propeptide spans 18 to 111 (KQQFSELQYR…TEEEKIFSTP (94 aa)) (activation peptide). 2 disulfides stabilise this stretch: Cys-132-Cys-178 and Cys-169-Cys-212. Cys-135 is a catalytic residue. Asn-228 and Asn-254 each carry an N-linked (GlcNAc...) asparagine glycan. Cys-270 and Cys-428 are joined by a disulfide. His-277 is an active-site residue. The tract at residues 286-396 (SGSSSSSGSS…SGSGSGAVEA (111 aa)) is disordered. A compositionally biased stretch (low complexity) spans 287 to 376 (GSSSSSGSSS…SASGQASASG (90 aa)). Residues 377–391 (SGSGSGSGSGSGSGS) are compositionally biased toward gly residues. Asn-406 is a catalytic residue.

It belongs to the peptidase C1 family. In terms of processing, glycosylated; contains GlcNAc-alpha-1-P-Ser residues and fucose.

Its subcellular location is the lysosome. The chain is Cysteine proteinase 4 (cprD) from Dictyostelium discoideum (Social amoeba).